The sequence spans 711 residues: Polyribonucleotide nucleotidyltransferase (711 aa).

Mg(2+) contacts are provided by aspartate 486 and aspartate 492. The KH domain maps to 553–612 (PRIHTIKINPDKIKDVIGKGGSVIRALTEETGTTIEIEDDGTVKIAATDGEKAKHAIRRI). An S1 motif domain is found at 622 to 690 (GRVYTGKVTR…RQGRIRLSIK (69 aa)). The segment at 689–711 (IKEATEQSQPAAAPEAPAAEQGE) is disordered. Positions 694–711 (EQSQPAAAPEAPAAEQGE) are enriched in low complexity.

This sequence belongs to the polyribonucleotide nucleotidyltransferase family. In terms of assembly, component of the RNA degradosome, which is a multiprotein complex involved in RNA processing and mRNA degradation. Mg(2+) serves as cofactor.

It localises to the cytoplasm. The catalysed reaction is RNA(n+1) + phosphate = RNA(n) + a ribonucleoside 5'-diphosphate. Involved in mRNA degradation. Catalyzes the phosphorolysis of single-stranded polyribonucleotides processively in the 3'- to 5'-direction. The sequence is that of Polyribonucleotide nucleotidyltransferase from Escherichia coli O8 (strain IAI1).